Here is a 234-residue protein sequence, read N- to C-terminus: Glucosamine-6-phosphate deaminase (234 aa).

The active-site Proton acceptor; for enolization step is the Asp63. The For ring-opening step role is filled by Asn129. The Proton acceptor; for ring-opening step role is filled by His131. Glu136 acts as the For ring-opening step in catalysis.

Belongs to the glucosamine/galactosamine-6-phosphate isomerase family. NagB subfamily.

The catalysed reaction is alpha-D-glucosamine 6-phosphate + H2O = beta-D-fructose 6-phosphate + NH4(+). It functions in the pathway amino-sugar metabolism; N-acetylneuraminate degradation; D-fructose 6-phosphate from N-acetylneuraminate: step 5/5. In terms of biological role, catalyzes the reversible isomerization-deamination of glucosamine 6-phosphate (GlcN6P) to form fructose 6-phosphate (Fru6P) and ammonium ion. This chain is Glucosamine-6-phosphate deaminase, found in Listeria welshimeri serovar 6b (strain ATCC 35897 / DSM 20650 / CCUG 15529 / CIP 8149 / NCTC 11857 / SLCC 5334 / V8).